We begin with the raw amino-acid sequence, 191 residues long: ECF RNA polymerase sigma-E factor (191 aa).

Positions 1 to 153 (MSEQLTDQVL…MAITLRELDG (153 aa)) are binds RNAP core. Residues 25-92 (LVVRYQHKVA…KNYLVAQGRR (68 aa)) form a sigma-70 factor domain-2 region. The Polymerase core binding motif lies at 48 to 61 (DVVQESFIKAYRAL). Positions 129–180 (QIVFRTIESLPEDLRMAITLRELDGLSYEEIAAIMDCPVGTVRSRIFRAREA) are sigma-70 factor domain-4. Positions 156–175 (YEEIAAIMDCPVGTVRSRIF) form a DNA-binding region, H-T-H motif.

The protein belongs to the sigma-70 factor family. ECF subfamily. In terms of assembly, interacts transiently with the RNAP catalytic core formed by RpoA, RpoB, RpoC and RpoZ (2 alpha, 1 beta, 1 beta' and 1 omega subunit) to form the RNAP holoenzyme that can initiate transcription. Interacts 1:1 with anti-sigma-E factor RseA which prevents binding to RNAP catalytic core.

It is found in the cytoplasm. With respect to regulation, ECF sigma-E is held in an inactive form by its cognate anti-sigma factor (RseA) until released by regulated intramembrane proteolysis (RIP). RIP occurs when an extracytoplasmic signal (periplasmic, acid or heat stress) triggers a concerted proteolytic cascade to transmit information and elicit cellular responses. In S.typhimurium there are 2 cascades, the heat shock response which depends on DegS and RseP, and acid response which depends only on RseP. The anti-sigma factor RseA is an inner membrane protein, binding sigma-E in the cytoplasm and RseB in the periplasm. RseA is first cut extracytoplasmically (site-1 protease, S1P, by DegS), then within the membrane itself (site-2 protease, S2P, by RseP), while cytoplasmic proteases (predominantly ClpX-ClpP) finish degrading the regulatory protein, liberating sigma-E. Degradation of RseA requires 2 signals to activate DegS; an outer membrane protein (OMP) signal activates DegS, while an LPS signal causes release of RseB from RseA, freeing RseA to be cleaved. OMP stress can be abrogated by overexpression of the sRNA rybB. Sigma factors are initiation factors that promote the attachment of RNA polymerase (RNAP) to specific initiation sites and are then released. Extracytoplasmic function (ECF) sigma-E controls the envelope stress response, responding to periplasmic protein stress, increased levels of periplasmic lipopolysaccharide (LPS) as well as acid stress, heat shock and oxidative stress; it controls protein processing in the extracytoplasmic compartment. The chain is ECF RNA polymerase sigma-E factor (rpoE) from Salmonella typhimurium (strain 14028s / SGSC 2262).